Reading from the N-terminus, the 180-residue chain is UPF0134 protein MPN_368 (180 aa).

It belongs to the UPF0134 family.

The chain is UPF0134 protein MPN_368 from Mycoplasma pneumoniae (strain ATCC 29342 / M129 / Subtype 1) (Mycoplasmoides pneumoniae).